The sequence spans 394 residues: NAD(P)H-quinone oxidoreductase subunit H (394 aa).

It belongs to the complex I 49 kDa subunit family. As to quaternary structure, NDH-1 can be composed of about 15 different subunits; different subcomplexes with different compositions have been identified which probably have different functions.

The protein resides in the cellular thylakoid membrane. It carries out the reaction a plastoquinone + NADH + (n+1) H(+)(in) = a plastoquinol + NAD(+) + n H(+)(out). The enzyme catalyses a plastoquinone + NADPH + (n+1) H(+)(in) = a plastoquinol + NADP(+) + n H(+)(out). Functionally, NDH-1 shuttles electrons from an unknown electron donor, via FMN and iron-sulfur (Fe-S) centers, to quinones in the respiratory and/or the photosynthetic chain. The immediate electron acceptor for the enzyme in this species is believed to be plastoquinone. Couples the redox reaction to proton translocation, and thus conserves the redox energy in a proton gradient. Cyanobacterial NDH-1 also plays a role in inorganic carbon-concentration. The sequence is that of NAD(P)H-quinone oxidoreductase subunit H from Nostoc sp. (strain PCC 7120 / SAG 25.82 / UTEX 2576).